Consider the following 158-residue polypeptide: Small t antigen (158 aa).

Met1 is subject to N-acetylmethionine; by host. The region spanning 12–75 is the J domain; the sequence is RLMHLLKLPM…LPCLSTQDFI (64 aa). The segment at 95–106 adopts a C4-type; atypical zinc-finger fold; it reads CNFENCNKCLYC. The H1C3-type; atypical zinc finger occupies 112–130; the sequence is HKSDPPFPKVWGYCLCYKC.

In terms of assembly, interacts with host PPP2R1A; the interaction inhibits PP2A activity.

The protein resides in the host cytoplasm. Its subcellular location is the host nucleus. Promotes efficient viral genome replication by accelerating both G1 and S phase progression of the cell cycle. Inhibits host PP2A by binding to the A subunit, thereby displacing lower affinity regulatory B subunit. Inactivation of PP2A in turn results in the transactivation of cyclin A and cyclin D1 promoters. Late during the infection cycle, ST may induce dephosphorylation of host MTOR, leading to the inhibition of cap-dependent translation. May establish and maintain high levels of viral genomes during persistent infection in cell culture. The chain is Small t antigen from Mus musculus (Mouse).